The primary structure comprises 408 residues: Peptidase T (408 aa).

His-78 contributes to the Zn(2+) binding site. The active site involves Asp-80. Zn(2+) is bound at residue Asp-141. Catalysis depends on Glu-175, which acts as the Proton acceptor. The Zn(2+) site is built by Glu-176, Asp-198, and His-380.

The protein belongs to the peptidase M20B family. Zn(2+) serves as cofactor.

It is found in the cytoplasm. It catalyses the reaction Release of the N-terminal residue from a tripeptide.. Its function is as follows. Cleaves the N-terminal amino acid of tripeptides. In Clostridium botulinum (strain Kyoto / Type A2), this protein is Peptidase T.